The sequence spans 72 residues: Translation initiation factor IF-1 (72 aa).

The S1-like domain occupies 1–72 (MAKEDTLEFP…TKGRINYRFK (72 aa)).

It belongs to the IF-1 family. Component of the 30S ribosomal translation pre-initiation complex which assembles on the 30S ribosome in the order IF-2 and IF-3, IF-1 and N-formylmethionyl-tRNA(fMet); mRNA recruitment can occur at any time during PIC assembly.

Its subcellular location is the cytoplasm. Its function is as follows. One of the essential components for the initiation of protein synthesis. Stabilizes the binding of IF-2 and IF-3 on the 30S subunit to which N-formylmethionyl-tRNA(fMet) subsequently binds. Helps modulate mRNA selection, yielding the 30S pre-initiation complex (PIC). Upon addition of the 50S ribosomal subunit IF-1, IF-2 and IF-3 are released leaving the mature 70S translation initiation complex. In Roseobacter denitrificans (strain ATCC 33942 / OCh 114) (Erythrobacter sp. (strain OCh 114)), this protein is Translation initiation factor IF-1.